A 259-amino-acid polypeptide reads, in one-letter code: UPF0014 membrane protein slr1647 (259 aa).

The next 7 helical transmembrane spans lie at A4–I24, L34–Y54, F55–M75, L98–I118, Y128–G148, M195–G215, and I225–T245.

This sequence belongs to the UPF0014 family.

It is found in the cell membrane. This is UPF0014 membrane protein slr1647 from Synechocystis sp. (strain ATCC 27184 / PCC 6803 / Kazusa).